A 120-amino-acid chain; its full sequence is MARVKRGVTSHAKHKKVFEAAKGFYGRRKNTIRAAKSAVERSMQYAYRDRKVKKRNFRALWIQRINAGVRALDLDLTYSRFIDGLGKAGIEVDRKVLSDIAIHEPDAFKALVEKAKAALA.

Belongs to the bacterial ribosomal protein bL20 family.

In terms of biological role, binds directly to 23S ribosomal RNA and is necessary for the in vitro assembly process of the 50S ribosomal subunit. It is not involved in the protein synthesizing functions of that subunit. The polypeptide is Large ribosomal subunit protein bL20 (Xanthobacter autotrophicus (strain ATCC BAA-1158 / Py2)).